The following is a 473-amino-acid chain: Rifampicin monooxygenase (473 aa).

The FAD site is built by Thr-12, Glu-31, Lys-32, and Arg-41. Arg-43 provides a ligand contact to rifampicin. FAD contacts are provided by Gln-98, Val-122, and Thr-156. Position 196 (Arg-196) interacts with rifampicin. Asp-276 serves as a coordination point for FAD. Gly-285 is a binding site for rifampicin. Positions 289 and 290 each coordinate FAD.

This sequence belongs to the rifampicin monooxygenase family. As to quaternary structure, homodimer. FAD is required as a cofactor.

It carries out the reaction rifampicin + NADPH + O2 = rifampicin para-naphthoquinone carboxamide + NADP(+) + H2O + H(+). It catalyses the reaction rifampicin + NADH + O2 = rifampicin para-naphthoquinone carboxamide + NAD(+) + H2O + H(+). In terms of biological role, monooxygenase that can modify rifampicin, thereby inactivating its antibiotic activity. It constitutes a secondary rifampicin resistance factor. This Nocardia farcinica (strain IFM 10152) protein is Rifampicin monooxygenase.